Reading from the N-terminus, the 269-residue chain is Protein TORNADO 2 (269 aa).

Residues Met-1–Cys-10 lie on the Cytoplasmic side of the membrane. The helical transmembrane segment at Ile-11–Ile-31 threads the bilayer. Topologically, residues Gly-32–Pro-44 are extracellular. A helical membrane pass occupies residues Val-45 to Trp-65. Residues Arg-66–Leu-71 are Cytoplasmic-facing. Residues Val-72–Ile-92 form a helical membrane-spanning segment. The Extracellular segment spans residues Tyr-93 to Asp-231. Residue Asn-200 is glycosylated (N-linked (GlcNAc...) asparagine). A helical membrane pass occupies residues Ile-232–Phe-252. The Cytoplasmic portion of the chain corresponds to Arg-253–Thr-269.

Belongs to the tetraspanin (TM4SF) family. Expressed in seedlings, roots, leaves, stems, apex, siliques and flowers. Present in ovules, prominently in nucellus and integuments.

It is found in the membrane. Functionally, involved in the basipetal transport of auxin (IAA) that modulates growth and organs organization, as well as cell differentiation. Regulates shoot apical meristem (SAM) organization in the peripheral zone. Required for initial meristematic divisions in the epidermal/lateral root cap leading to the formation of epidermal cells and a clone of lateral root cap cells, as well as for the maintenance of the radial pattern of cell specification in the root, thus regulating the distinction between the lateral root cap and epidermis. Together with WIH peptides, promotes megasporogenesis. This Arabidopsis thaliana (Mouse-ear cress) protein is Protein TORNADO 2 (TRN2).